A 1188-amino-acid chain; its full sequence is DNA-directed RNA polymerase subunit beta (1188 aa).

The protein belongs to the RNA polymerase beta chain family. The RNAP catalytic core consists of 2 alpha, 1 beta, 1 beta' and 1 omega subunit. When a sigma factor is associated with the core the holoenzyme is formed, which can initiate transcription.

The catalysed reaction is RNA(n) + a ribonucleoside 5'-triphosphate = RNA(n+1) + diphosphate. DNA-dependent RNA polymerase catalyzes the transcription of DNA into RNA using the four ribonucleoside triphosphates as substrates. The protein is DNA-directed RNA polymerase subunit beta of Streptococcus pyogenes serotype M3 (strain ATCC BAA-595 / MGAS315).